A 428-amino-acid polypeptide reads, in one-letter code: Threonine synthase (428 aa).

Lys107 carries the post-translational modification N6-(pyridoxal phosphate)lysine.

It belongs to the threonine synthase family. Requires pyridoxal 5'-phosphate as cofactor.

It carries out the reaction O-phospho-L-homoserine + H2O = L-threonine + phosphate. It functions in the pathway amino-acid biosynthesis; L-threonine biosynthesis; L-threonine from L-aspartate: step 5/5. Is competitively inhibited by L-threo-3-hydroxyhomoserine phosphate. Its function is as follows. Catalyzes the gamma-elimination of phosphate from L-phosphohomoserine and the beta-addition of water to produce L-threonine. To a lesser extent, is able to slowly catalyze the deamination of L-threonine into alpha-ketobutyrate and that of L-serine and 3-chloroalanine into pyruvate. Is also able to rapidly convert vinylglycine to threonine, which proves that the pyridoxal p-quinonoid of vinylglycine is an intermediate in the TS reaction. The protein is Threonine synthase (thrC) of Escherichia coli (strain K12).